Consider the following 194-residue polypeptide: Peptidyl-tRNA hydrolase (194 aa).

Catalysis depends on histidine 22, which acts as the Proton acceptor. Residues tyrosine 67, asparagine 69, and asparagine 115 each coordinate tRNA.

This sequence belongs to the PTH family. As to quaternary structure, monomer.

Its subcellular location is the cytoplasm. The enzyme catalyses an N-acyl-L-alpha-aminoacyl-tRNA + H2O = an N-acyl-L-amino acid + a tRNA + H(+). Its function is as follows. Hydrolyzes ribosome-free peptidyl-tRNAs (with 1 or more amino acids incorporated), which drop off the ribosome during protein synthesis, or as a result of ribosome stalling. In terms of biological role, catalyzes the release of premature peptidyl moieties from peptidyl-tRNA molecules trapped in stalled 50S ribosomal subunits, and thus maintains levels of free tRNAs and 50S ribosomes. The protein is Peptidyl-tRNA hydrolase of Granulibacter bethesdensis (strain ATCC BAA-1260 / CGDNIH1).